The chain runs to 575 residues: Dihydroxy-acid dehydratase (575 aa).

Cys-64 contacts [2Fe-2S] cluster. Mg(2+) is bound at residue Asp-96. Cys-137 is a [2Fe-2S] cluster binding site. Residues Asp-138 and Lys-139 each contribute to the Mg(2+) site. Lys-139 bears the N6-carboxylysine mark. Cys-214 contacts [2Fe-2S] cluster. Glu-465 contacts Mg(2+). The active-site Proton acceptor is Ser-491.

The protein belongs to the IlvD/Edd family. As to quaternary structure, homodimer. [2Fe-2S] cluster is required as a cofactor. It depends on Mg(2+) as a cofactor.

It carries out the reaction (2R)-2,3-dihydroxy-3-methylbutanoate = 3-methyl-2-oxobutanoate + H2O. It catalyses the reaction (2R,3R)-2,3-dihydroxy-3-methylpentanoate = (S)-3-methyl-2-oxopentanoate + H2O. The protein operates within amino-acid biosynthesis; L-isoleucine biosynthesis; L-isoleucine from 2-oxobutanoate: step 3/4. Its pathway is amino-acid biosynthesis; L-valine biosynthesis; L-valine from pyruvate: step 3/4. Its function is as follows. Functions in the biosynthesis of branched-chain amino acids. Catalyzes the dehydration of (2R,3R)-2,3-dihydroxy-3-methylpentanoate (2,3-dihydroxy-3-methylvalerate) into 2-oxo-3-methylpentanoate (2-oxo-3-methylvalerate) and of (2R)-2,3-dihydroxy-3-methylbutanoate (2,3-dihydroxyisovalerate) into 2-oxo-3-methylbutanoate (2-oxoisovalerate), the penultimate precursor to L-isoleucine and L-valine, respectively. The chain is Dihydroxy-acid dehydratase from Mycobacterium bovis (strain ATCC BAA-935 / AF2122/97).